Here is a 708-residue protein sequence, read N- to C-terminus: MAAAAVAAAAAAAAAASLQVLEMESMETAAAGSAGLAAEVRGSGTVDFGPGPGISAMEASGGDPGPEAEDFECSSHCSELSWRQNEQRRQGLFCDITLCFGGAGGREFRAHRSVLAAATEYFTPLLSGQFSESRSGRVEMRKWSSEPGPEPDTVEAVIEYMYTGRIRVSTGSVHEVLELADRFLLIRLKEFCGEFLKKKLHLSNCVAIHSLAHMYTLSQLALKAADMIRRNFHKVIQDEEFYTLPFHLIRDWLSDLEITVDSEEVLFETVLKWVQRNAEERERYFEELFKLLRLSQMKPTYLTRHVKPERLVANNEVCVKLVADAVERHALRAENIQSGTCQHPTSHVSLLPRYGQNMDVIMVIGGVSEGGDYLSECVGYFVDEDRWVNLPHIHNHLDGHAVAVTESYVYVAGSMEPGFAKTVERYNPNLNTWEHVCSLMTRKHSFGLTEVKGKLYSIGGHGNFSPGFKDVTVYNPELDKWHNLESAPKILRDVKALAIEDRFVYIAARTPVDRDTEDGLKAVITCYDTETRQWQDVESLPLIDNYCFFQMSVVNSNFYQTASCCPKSYCLENEEAVRKIASQVSDEILESLPPEVLSIEGAAICYYKDDVFIIGGWKNSDDIDKQYRKEAYRYCAERKRWMLLPPMPQPRCRATACHVRIPYRYLHGTQRYPMPQNLMWQKDRIRQMQEIHRHALNMRRVPSSQIEC.

Positions 1-15 (MAAAAVAAAAAAAAA) are cleaved as a signal peptide. The segment at 47–70 (DFGPGPGISAMEASGGDPGPEAED) is disordered. A BTB domain is found at 94–170 (CDITLCFGGA…MYTGRIRVST (77 aa)). Residues 205 to 307 (CVAIHSLAHM…KPTYLTRHVK (103 aa)) enclose the BACK domain. Kelch repeat units follow at residues 360 to 407 (VIMV…VTES), 408 to 453 (YVYV…EVKG), 455 to 501 (LYSI…AIED), 503 to 556 (FVYI…VVNS), and 610 to 661 (DVFI…HVRI). A Phosphoserine modification is found at Ser-465.

As to quaternary structure, component of a cullin-RING-based BCR (BTB-CUL3-RBX1) E3 ubiquitin-protein ligase complex. Homodimer. Interacts with CUL3.

Functionally, component of a cullin-RING-based BCR (BTB-CUL3-RBX1) E3 ubiquitin-protein ligase complex that mediates the ubiquitination of target proteins, leading most often to their proteasomal degradation. This chain is Kelch-like protein 11 (KLHL11), found in Homo sapiens (Human).